The primary structure comprises 221 residues: Probable transaldolase (221 aa).

Residue Lys83 is the Schiff-base intermediate with substrate of the active site.

The protein belongs to the transaldolase family. Type 3B subfamily.

The protein localises to the cytoplasm. The catalysed reaction is D-sedoheptulose 7-phosphate + D-glyceraldehyde 3-phosphate = D-erythrose 4-phosphate + beta-D-fructose 6-phosphate. It participates in carbohydrate degradation; pentose phosphate pathway; D-glyceraldehyde 3-phosphate and beta-D-fructose 6-phosphate from D-ribose 5-phosphate and D-xylulose 5-phosphate (non-oxidative stage): step 2/3. Transaldolase is important for the balance of metabolites in the pentose-phosphate pathway. This Petrotoga mobilis (strain DSM 10674 / SJ95) protein is Probable transaldolase.